The chain runs to 2113 residues: MDEVEEDQHEARLKELFDSFDTLGTGSLGQEELTDLCHVLCLEDVGPVLQQTLLQDNLLGRVHFDQFKEALILILSRTLSSEEHFEESDCSPEAQPKYVRGGKRYGRRSLPEFQESGEEIEEVTVLEPLEEEARSSPIPAGDCGEHWKTQRSEEYEAEGQLRFWNPDDLNASHGGSCPPPDWIEEKLQEVCEDLGITRDGHLNRKKLVSICEQYGLQNVDGAMLEEVFLSLDPDGTMSVEDFFYGLFKTGKSLTPSASTPYRQLKRHLSMQSFDESGRRTATSSAMTSTIGFRVFSCLDDGMGQASVERILDTWQEEGIENSQEILKALDFSLDGNINLTELTLALENELLVTKNGIHQAALASFKAEIRHLLERVDQVVREKEKLRSDLDKAEKLKSLMASEVDDHHAAIERRNEYNLRKLDEEYKERIAALKNELRQEREQMLQQVGKQRVELEQEIQKAKTEENYIRDRLALSLKENNRLETELLENAEKLAEYESLTQKLQRSLENVLAEKFGDLDPSSAEFFLQEERLAQMRNEYEQQCRLLQDQVDELQSELEEYQAQGRVLRLPLKNSLSEELDGHSGGIEPDQGPGSEECNPLNMSIEAELVIEQMKEQHHRDLCHLRLELEDKVRHYEKQLDDTRVASEQEQAAMKQKYEQGVHTLEKRVSELRSEIADLEGQAAVLREAHHKASCRHEEEKRQLQMAFDEEKAQLQEELRQEHERELQARLQQAAESFRQEREGLAQAAWTEEKVRGLEQSYQEQLLSLEEKHALEKEELREELSEHHRRELQEGREEMETECNRRVSQIEAQCQADCEKVTEHCEQTLQSLEVRHRQELRDLLDQHLEERSQWEFEKDELTQECTDAQEQLKEALQRERATAAAMKQEQEILERTYKDRLNILSTERKQLLQDLKDLQNASESQHGLLSGQILELKRSQERELRDQGQALCQTGVSEQLASQQLERLRVEHEQERREMTGKLAALESAHRASLERADQEKAEMSTEICRLQNTVKDMQQAASLLMLQGGCQATAGEEAEGDGAMSLLQQGEQLLEENGDVLISLQRAHEHAVKENAKMATEISRLQQRLKKLEPGSVISSCLEEGTSEISGSSREQVEPIMKQGPATKHFLSDLGDHEARDLASTGTSSVQRQECKTEASEASLDCFSELENSEDTRTESWDLKSQISQLREQLTVLRADCDRASERKQDLLFDISVLKKKLKMLERLPEASSRYKVLYEDAARENSCLQEELRLVETRYEESLDSNKELTAEVYRLQDEMKKMEEVMETFLSLEKSYDEVKVENEELRALVLRLQGKMEKVLGRAALQGDSYALWEAPSENLEVASDEKMLELRQTPKECTPKVVSMHHIIEECTQETQCCEQGSTKLLARIKAHEIAWFHRAIKTHPEKPSAQNRVIPEGSAALLGLQDKHLQQEATIAELELEKQKLQELTRNLRERVTALVRQKDAPSQGQKEEELKAMMQDLQITCGEMQRKVELLRYESEKLQEENSILRNEITTLNEEDSISNLKLEELNGSQEELWQKIETIEQEKASIQTMVEKLKKQVSDLKIKNQQLDSENIELSQKNSQNKEELKTLNQRLAEMLCQREEPGACTSEKWEQENASLKEELDHYKVQTSTLVSSLEAELSEVKLQTHVMEQENLLLKDELERLKQLHRCPDLSDFQQKMSSILSYNEKLLKEKEVLSEELKSCADKLAESSLLEHRIATMKQEQTAWEEQSESLKSQLAVSQAKVQNLEDVLQNVNLQMAEIESDLQVTRQEKEALKQEVMSLHRQLQNAIDKDWVSETAPHLSGLRGQQRRLSWDKLDHLMNEEPQLLCQESKRLQTVVQNTQADLTHSREKVRQLESNLLPTKHQKQLNQPCTVKSTEQEKLTLKRECEQSQKEQSPTSRKVGQMGSLERGLETIHLENEGLKKKQMQPLRSTVTRSPSSHWDLQLLQQQACPMVPREQFLQLQQQLLQAEKRSQHLQEELENRTSETNTPQGNQEHLVNLMEERMIEVEQKLKLVKRLLQEKVNQLKEQLCKNTKTDAVVKDLYVENAQLLKALEMTEQRQKTAEKRNFLLEEKIASLSTIVRNLAPAPLTSMPPLRS.

EF-hand domains are found at residues 8–43 (QHEARLKELFDSFDTLGTGSLGQEELTDLCHVLCLE) and 42–77 (LEDVGPVLQQTLLQDNLLGRVHFDQFKEALILILSR). Ser-152 is modified (phosphoserine). 2 consecutive EF-hand domains span residues 182–217 (WIEEKLQEVCEDLGITRDGHLNRKKLVSICEQYGLQ) and 219–252 (VDGAMLEEVFLSLDPDGTMSVEDFFYGLFKTGKS). Residue 245-252 (GLFKTGKS) coordinates GTP. Residue Ser-269 is modified to Phosphoserine. Position 300 to 304 (300 to 304 (DGMGQ)) interacts with GTP. One can recognise an EF-hand 5 domain in the interval 317 to 352 (EGIENSQEILKALDFSLDGNINLTELTLALENELLV). Positions 358–570 (HQAALASFKA…YQAQGRVLRL (213 aa)) form a coiled coil. 420–423 (RKLD) provides a ligand contact to GTP. Residues 578–599 (EELDGHSGGIEPDQGPGSEECN) are disordered. 4 coiled-coil regions span residues 620 to 926 (RDLC…ESQH), 958 to 1008 (EQLA…STEI), 1175 to 1323 (EDTR…MEKV), and 1425 to 1806 (AALL…IDKD). The segment at 798-1495 (EMETECNRRV…QDLQITCGEM (698 aa)) is important for interaction with CEP170. 2 positions are modified to phosphoserine: Ser-1540 and Ser-1826. Coiled-coil stretches lie at residues 1852 to 1910 (VQNT…KEQS) and 1971 to 2093 (REQF…IASL). Disordered regions lie at residues 1899–1922 (KRECEQSQKEQSPTSRKVGQMGSL) and 1988–2008 (SQHLQEELENRTSETNTPQGN). Residues 1988 to 1999 (SQHLQEELENRT) show a composition bias toward basic and acidic residues.

As to quaternary structure, homooligomer. Interacts with GSK3B/GSK3-beta via its C-terminal domain. Interacts with C14ORF166, such interaction may prevent its phosphorylation by GSK3B. Interacts with AUNIP (via N-terminus). Identified in a complex with AUNIP and AURKA. Interacts with CCDC120. Interacts (via C-terminus) with CEP250. Interacts with CEP170. Interacts (via N-terminus) with the gamma-tubulin ring complex component TUBGCP3. Interacts with gamma-tubulin. Isoform 4 does not interact with CEP170 or CEP250. Post-translationally, phosphorylated by AURKA/Aurora kinase A and PKA kinases but not CK2 or AURKB/Aurora kinase B. As to expression, widely expressed. Highly expressed in spleen, bone marrow and skin. Weakly expressed in liver and small intestine. Expressed in brain.

Its subcellular location is the cytoplasm. The protein localises to the cytoskeleton. It localises to the microtubule organizing center. It is found in the centrosome. The protein resides in the centriole. Its function is as follows. Centrosomal protein required for the positioning and anchorage of the microtubule minus-end in epithelial cells. May also act as a centrosome maturation factor. May play a role in microtubule nucleation, by recruiting the gamma-tubulin ring complex to the centrosome. Overexpression does not perturb nucleation or elongation of microtubules but suppresses release of microtubules. Required for centriole organization and microtubule anchoring at the mother centriole. This is Ninein from Mus musculus (Mouse).